Reading from the N-terminus, the 322-residue chain is MASSQGKSELRYADWMSSLPDTLHGIPLTNLAIPGSHDSFSFYIDEASPVGPEQPETVQNFVSVFGTVAKKLMRKWLATQTMNFTSQLEAGIRFFDLRISTKPRDPDNELYFAHGLFSATVREGLEQISTFLASHAREVVFLDFNHFYGVQNLHHEKLVQMLRTVFGDRLCPVVFAQEVSLKYLWEKEYQVLVFYHNPMALEVPFLWPGQMMPAPWANTTDPEKLILFLQASVKDRRRKGTFFVSQVVLTPKASTVMKGVTSGLRETITERALPSMMQWIRSQRPGESGVNIITADFVELGEFISAVITLNYYLDDEEENAT.

Residues 22–197 enclose the PI-PLC X-box domain; it reads TLHGIPLTNL…EYQVLVFYHN (176 aa). Residues His37 and His114 contribute to the active site.

The protein is PI-PLC X domain-containing protein 3 (plcxd3) of Danio rerio (Zebrafish).